The primary structure comprises 179 residues: Large ribosomal subunit protein uL5 (179 aa).

The protein belongs to the universal ribosomal protein uL5 family. Part of the 50S ribosomal subunit; part of the 5S rRNA/L5/L18/L25 subcomplex. Contacts the 5S rRNA and the P site tRNA. Forms a bridge to the 30S subunit in the 70S ribosome.

This is one of the proteins that bind and probably mediate the attachment of the 5S RNA into the large ribosomal subunit, where it forms part of the central protuberance. In the 70S ribosome it contacts protein S13 of the 30S subunit (bridge B1b), connecting the 2 subunits; this bridge is implicated in subunit movement. Contacts the P site tRNA; the 5S rRNA and some of its associated proteins might help stabilize positioning of ribosome-bound tRNAs. The chain is Large ribosomal subunit protein uL5 from Clostridium beijerinckii (strain ATCC 51743 / NCIMB 8052) (Clostridium acetobutylicum).